A 169-amino-acid chain; its full sequence is UPF0725 protein At2g19200 (169 aa).

The protein belongs to the UPF0725 (EMB2204) family.

This chain is UPF0725 protein At2g19200, found in Arabidopsis thaliana (Mouse-ear cress).